Reading from the N-terminus, the 328-residue chain is Tetraacyldisaccharide 4'-kinase (328 aa).

58 to 65 is a binding site for ATP; it reads TMGGAGKT.

This sequence belongs to the LpxK family.

It carries out the reaction a lipid A disaccharide + ATP = a lipid IVA + ADP + H(+). It participates in glycolipid biosynthesis; lipid IV(A) biosynthesis; lipid IV(A) from (3R)-3-hydroxytetradecanoyl-[acyl-carrier-protein] and UDP-N-acetyl-alpha-D-glucosamine: step 6/6. Functionally, transfers the gamma-phosphate of ATP to the 4'-position of a tetraacyldisaccharide 1-phosphate intermediate (termed DS-1-P) to form tetraacyldisaccharide 1,4'-bis-phosphate (lipid IVA). This Phenylobacterium zucineum (strain HLK1) protein is Tetraacyldisaccharide 4'-kinase.